We begin with the raw amino-acid sequence, 203 residues long: MIGQLSGKVDAQGDDYVIIDVNGVGYLVYASGKTLGKLAEGEFYKLFIETHVREEHIHLYGFLNLEEKIFFNLLQSVNGIGTRMALFILSSLTPSDIQIAVNNEDKNIFKAISGVGAKLAERIVLELKGKVAKISSGSAIIKESLNIKHITPVASNEVIKALVNLGFSRFEAQNAVQGIITQNPEISIDELIKTALKNRNSNF.

The domain I stretch occupies residues 1–63 (MIGQLSGKVD…EEHIHLYGFL (63 aa)). Positions 64–142 (NLEEKIFFNL…KISSGSAIIK (79 aa)) are domain II. The segment at 143-149 (ESLNIKH) is flexible linker. A domain III region spans residues 150 to 203 (ITPVASNEVIKALVNLGFSRFEAQNAVQGIITQNPEISIDELIKTALKNRNSNF).

It belongs to the RuvA family. Homotetramer. Forms an RuvA(8)-RuvB(12)-Holliday junction (HJ) complex. HJ DNA is sandwiched between 2 RuvA tetramers; dsDNA enters through RuvA and exits via RuvB. An RuvB hexamer assembles on each DNA strand where it exits the tetramer. Each RuvB hexamer is contacted by two RuvA subunits (via domain III) on 2 adjacent RuvB subunits; this complex drives branch migration. In the full resolvosome a probable DNA-RuvA(4)-RuvB(12)-RuvC(2) complex forms which resolves the HJ.

The protein resides in the cytoplasm. In terms of biological role, the RuvA-RuvB-RuvC complex processes Holliday junction (HJ) DNA during genetic recombination and DNA repair, while the RuvA-RuvB complex plays an important role in the rescue of blocked DNA replication forks via replication fork reversal (RFR). RuvA specifically binds to HJ cruciform DNA, conferring on it an open structure. The RuvB hexamer acts as an ATP-dependent pump, pulling dsDNA into and through the RuvAB complex. HJ branch migration allows RuvC to scan DNA until it finds its consensus sequence, where it cleaves and resolves the cruciform DNA. The sequence is that of Holliday junction branch migration complex subunit RuvA from Rickettsia africae (strain ESF-5).